Consider the following 466-residue polypeptide: F-box only protein 15 (466 aa).

An F-box domain is found at 27-73 (SASLDSLPSEVLLKILSYLDAAALLCAGCVNRRFYHLANDNFIWIRI).

Directly interacts with SKP1 and CUL1.

Its function is as follows. Substrate-recognition component of the SCF (SKP1-CUL1-F-box protein)-type E3 ubiquitin ligase complex. This is F-box only protein 15 (FBXO15) from Bos taurus (Bovine).